Consider the following 161-residue polypeptide: 2-C-methyl-D-erythritol 2,4-cyclodiphosphate synthase (161 aa).

A divalent metal cation-binding residues include Asp11 and His13. 4-CDP-2-C-methyl-D-erythritol 2-phosphate-binding positions include 11–13 (DIH) and 37–38 (HS). His45 is a binding site for a divalent metal cation. Residues 59-61 (DIG), 135-138 (TTNE), and Arg145 each bind 4-CDP-2-C-methyl-D-erythritol 2-phosphate.

Belongs to the IspF family. Homotrimer. It depends on a divalent metal cation as a cofactor.

It carries out the reaction 4-CDP-2-C-methyl-D-erythritol 2-phosphate = 2-C-methyl-D-erythritol 2,4-cyclic diphosphate + CMP. The protein operates within isoprenoid biosynthesis; isopentenyl diphosphate biosynthesis via DXP pathway; isopentenyl diphosphate from 1-deoxy-D-xylulose 5-phosphate: step 4/6. Functionally, involved in the biosynthesis of isopentenyl diphosphate (IPP) and dimethylallyl diphosphate (DMAPP), two major building blocks of isoprenoid compounds. Catalyzes the conversion of 4-diphosphocytidyl-2-C-methyl-D-erythritol 2-phosphate (CDP-ME2P) to 2-C-methyl-D-erythritol 2,4-cyclodiphosphate (ME-CPP) with a corresponding release of cytidine 5-monophosphate (CMP). The protein is 2-C-methyl-D-erythritol 2,4-cyclodiphosphate synthase of Thermosynechococcus vestitus (strain NIES-2133 / IAM M-273 / BP-1).